Reading from the N-terminus, the 305-residue chain is Axin interactor, dorsalization-associated protein B (305 aa).

Positions 126–137 (ENLEVEEEEEDG) are enriched in acidic residues. Residues 126–146 (ENLEVEEEEEDGGAGAGSPDL) form a disordered region. The axin-binding stretch occupies residues 153-220 (GTLLPRLPSE…RKEDTYVHFN (68 aa)). The C2 Aida-type domain occupies 156-303 (LPRLPSEPGM…LYLHLLQTLL (148 aa)).

The protein belongs to the AIDA family.

Acts as a ventralizing factor during embryogenesis. Inhibits axin-mediated JNK activation by binding axin and disrupting axin homodimerization. This in turn antagonizes a Wnt/beta-catenin-independent dorsalization pathway activated by axin/JNK-signaling. The protein is Axin interactor, dorsalization-associated protein B (aida-b) of Xenopus laevis (African clawed frog).